Consider the following 384-residue polypeptide: Ribosomal RNA large subunit methyltransferase G (384 aa).

Belongs to the methyltransferase superfamily. RlmG family.

It is found in the cytoplasm. It catalyses the reaction guanosine(1835) in 23S rRNA + S-adenosyl-L-methionine = N(2)-methylguanosine(1835) in 23S rRNA + S-adenosyl-L-homocysteine + H(+). Functionally, specifically methylates the guanine in position 1835 (m2G1835) of 23S rRNA. This is Ribosomal RNA large subunit methyltransferase G from Pseudoalteromonas atlantica (strain T6c / ATCC BAA-1087).